A 317-amino-acid chain; its full sequence is tRNA dimethylallyltransferase (317 aa).

14-21 (GPTASGKS) is an ATP binding site. 16–21 (TASGKS) lines the substrate pocket. Interaction with substrate tRNA stretches follow at residues 39–42 (DSVL) and 163–167 (QRIQR).

Belongs to the IPP transferase family. In terms of assembly, monomer. Mg(2+) is required as a cofactor.

It catalyses the reaction adenosine(37) in tRNA + dimethylallyl diphosphate = N(6)-dimethylallyladenosine(37) in tRNA + diphosphate. Its function is as follows. Catalyzes the transfer of a dimethylallyl group onto the adenine at position 37 in tRNAs that read codons beginning with uridine, leading to the formation of N6-(dimethylallyl)adenosine (i(6)A). The sequence is that of tRNA dimethylallyltransferase from Xylella fastidiosa (strain 9a5c).